We begin with the raw amino-acid sequence, 403 residues long: Glucose/galactose-binding lipoprotein (403 aa).

A signal peptide spans 1–25 (MKENSCTACSRRLALFVGAAVLVVG). The N-palmitoyl cysteine moiety is linked to residue Cys26. Cys26 carries the S-diacylglycerol cysteine lipid modification.

The protein belongs to the bacterial solute-binding protein 2 family.

It is found in the cell membrane. Functionally, may be involved in the transport of sugars. May have a role in chemotaxis. This Treponema pallidum (strain Nichols) protein is Glucose/galactose-binding lipoprotein (mglB).